The following is a 547-amino-acid chain: Undecaprenyl phosphate-alpha-4-amino-4-deoxy-L-arabinose arabinosyl transferase (547 aa).

11 helical membrane passes run 1-21 (MKLT…LPLD), 83-103 (FASA…ALQL), 111-131 (FLAG…TYSV), 174-194 (FLTK…PYVI), 205-225 (FGPL…IAVH), 253-273 (APFW…LGLL), 286-306 (ISPE…FFSV), 311-331 (LLTY…ASAV), 346-366 (AWLN…LALS), 378-398 (GALA…FIQL), and 408-428 (SALC…QSLI).

This sequence belongs to the glycosyltransferase 83 family.

Its subcellular location is the cell inner membrane. The enzyme catalyses 4-amino-4-deoxy-alpha-L-arabinopyranosyl di-trans,octa-cis-undecaprenyl phosphate + lipid IVA = lipid IIA + di-trans,octa-cis-undecaprenyl phosphate.. It functions in the pathway lipopolysaccharide metabolism; 4-amino-4-deoxy-beta-L-arabinose-lipid A biosynthesis. Its function is as follows. Catalyzes the transfer of the L-Ara4N moiety of the glycolipid undecaprenyl phosphate-alpha-L-Ara4N to lipid A. The modified arabinose is attached to lipid A and is required for resistance to polymyxin and cationic antimicrobial peptides. The polypeptide is Undecaprenyl phosphate-alpha-4-amino-4-deoxy-L-arabinose arabinosyl transferase (Aeromonas salmonicida (strain A449)).